We begin with the raw amino-acid sequence, 344 residues long: GTP 3',8-cyclase (344 aa).

A Radical SAM core domain is found at 19 to 239 (PFGRTIDYLR…ANYTLTDLPD (221 aa)). Position 28 (arginine 28) interacts with GTP. Residues cysteine 35 and cysteine 39 each coordinate [4Fe-4S] cluster. Tyrosine 41 provides a ligand contact to S-adenosyl-L-methionine. Cysteine 42 serves as a coordination point for [4Fe-4S] cluster. Arginine 77 lines the GTP pocket. S-adenosyl-L-methionine is bound at residue glycine 81. GTP is bound at residue threonine 111. Serine 135 serves as a coordination point for S-adenosyl-L-methionine. Lysine 171 contributes to the GTP binding site. Methionine 205 serves as a coordination point for S-adenosyl-L-methionine. [4Fe-4S] cluster-binding residues include cysteine 268 and cysteine 271. 273 to 275 (RVR) is a binding site for GTP. Residue cysteine 285 participates in [4Fe-4S] cluster binding.

Belongs to the radical SAM superfamily. MoaA family. As to quaternary structure, monomer and homodimer. The cofactor is [4Fe-4S] cluster.

It catalyses the reaction GTP + AH2 + S-adenosyl-L-methionine = (8S)-3',8-cyclo-7,8-dihydroguanosine 5'-triphosphate + 5'-deoxyadenosine + L-methionine + A + H(+). The protein operates within cofactor biosynthesis; molybdopterin biosynthesis. Its function is as follows. Catalyzes the cyclization of GTP to (8S)-3',8-cyclo-7,8-dihydroguanosine 5'-triphosphate. The chain is GTP 3',8-cyclase from Rhodopseudomonas palustris (strain ATCC BAA-98 / CGA009).